A 489-amino-acid polypeptide reads, in one-letter code: FAD-containing monooxygenase EthA (489 aa).

Residues Ser-15, Glu-36, 44–47 (TWDL), Asp-56, and Val-104 contribute to the FAD site. Residue 54-56 (RSD) coordinates NADP(+). NADP(+) is bound by residues 183–189 (SGATAVT) and 207–208 (RS).

It belongs to the FAD-binding monooxygenase family. FAD is required as a cofactor.

It localises to the cell membrane. The enzyme catalyses ethionamide + NADPH + O2 + H(+) = ethionamide S-oxide + NADP(+) + H2O. Functionally, monooxygenase able to convert a wide range of ketones to the corresponding esters or lactones via a Baeyer-Villiger oxidation reaction. Can act on long-chain aliphatic ketones (2-hexanone to 2-dodecanone) and on aromatic ketones (phenylacetone and benzylacetone). Is also able to catalyze enantioselective sulfoxidation of methyl-p-tolylsulfide. In vivo, likely functions as a BVMO, but the exact nature of the physiological substrate(s) remains to be established. In terms of biological role, is responsible for the activation of several thiocarbamide-containing pro-drugs, such as ethionamide (ETH), isoxyl (ISO) and thiacetazone (TAC), into reactive species. The chain is FAD-containing monooxygenase EthA (ethA) from Mycobacterium bovis (strain ATCC BAA-935 / AF2122/97).